We begin with the raw amino-acid sequence, 691 residues long: Protein vreteno (691 aa).

Positions 128 to 155 are disordered; the sequence is QKEREITSDPVTSTEPMPTPGPAISATE. Tudor domains lie at 366-427 and 573-630; these read KLQS…LAGL and APPI…FIFP.

In terms of assembly, interacts with aub and piwi. As to expression, gonad-specific.

Its subcellular location is the cytoplasm. It localises to the cytoplasmic ribonucleoprotein granule. In terms of biological role, gonad-specific protein essential for germline development to repress transposable elements and preventing their mobilization, which is essential for the germline integrity. Acts via the piRNA metabolic process in both germline and somatic gonadal tissues by mediating the repression of transposable elements during meiosis. Required for primary piRNA biogenesis in both germline and somatic gonadal tissues. This is Protein vreteno (vret) from Drosophila melanogaster (Fruit fly).